Here is a 582-residue protein sequence, read N- to C-terminus: ATP-dependent lipid A-core flippase (582 aa).

6 consecutive transmembrane segments (helical) span residues 23 to 43, 61 to 81, 140 to 160, 163 to 183, 247 to 267, and 273 to 293; these read AAFIAAILCMIGYSAIDTLFL, ILLYGALFVPFIFILRGSLNV, AVLVLVKEGAFVAGLLGLMFY, WQLSLVFLVIGPLVAKVVGVV, AISTSVIQFIASLSLSMVLVI, and MLGELSAGAFTTLLTAMIMLL. The ABC transmembrane type-1 domain maps to 26–308; the sequence is IAAILCMIGY…LTNVNSDFQR (283 aa). Residues 340 to 576 form the ABC transporter domain; that stretch reads IVFDDVTFSY…EGAYFQLHNL (237 aa). 374 to 381 is a binding site for ATP; that stretch reads GRSGSGKS.

It belongs to the ABC transporter superfamily. Lipid exporter (TC 3.A.1.106) family. As to quaternary structure, homodimer.

It is found in the cell inner membrane. The enzyme catalyses ATP + H2O + lipid A-core oligosaccharideSide 1 = ADP + phosphate + lipid A-core oligosaccharideSide 2.. In terms of biological role, involved in lipopolysaccharide (LPS) biosynthesis. Translocates lipid A-core from the inner to the outer leaflet of the inner membrane. Transmembrane domains (TMD) form a pore in the inner membrane and the ATP-binding domain (NBD) is responsible for energy generation. This chain is ATP-dependent lipid A-core flippase, found in Idiomarina loihiensis (strain ATCC BAA-735 / DSM 15497 / L2-TR).